A 33-amino-acid polypeptide reads, in one-letter code: Photosystem II reaction center protein Psb30 (33 aa).

Residues 5–25 (VIAQLIALALIVGSGPLVIAL) traverse the membrane as a helical segment.

Belongs to the Psb30/Ycf12 family. As to quaternary structure, PSII is composed of 1 copy each of membrane proteins PsbA, PsbB, PsbC, PsbD, PsbE, PsbF, PsbH, PsbI, PsbJ, PsbK, PsbL, PsbM, PsbT, PsbX, PsbY, PsbZ, Psb30/Ycf12, peripheral proteins of the oxygen-evolving complex and a large number of cofactors. It forms dimeric complexes.

It is found in the plastid. The protein resides in the chloroplast thylakoid membrane. In terms of biological role, a core subunit of photosystem II (PSII), probably helps stabilize the reaction center. The polypeptide is Photosystem II reaction center protein Psb30 (Physcomitrium patens (Spreading-leaved earth moss)).